The sequence spans 50 residues: Temporin-SHa (50 aa).

An N-terminal signal peptide occupies residues 1 to 10 (FLGTINLSLC). The propeptide occupies 11-35 (EQERDADEEERRDEPNESNVEVEKR). Phenylalanine amide is present on Phe48.

Belongs to the frog skin active peptide (FSAP) family. Temporin subfamily. In terms of tissue distribution, expressed by the skin glands.

It localises to the secreted. It is found in the target cell membrane. Its function is as follows. Amphipathic alpha-helical antimicrobial peptide with highly potent activity against Gram-positive bacteria, and potent activity Gram-negative bacteria and fungi (MIC=2-30 uM). Acts through membranolytic mechanism involving rapid membrane permeabilization and depolarization. Shows a direct extra-cellular antiviral activity probably through degradation of the viral envelope. Also shows a weak indirect antiviral activity by inhibiting virus replication. Also displays anti-trypanosoma and anti-leishmania (prosmastigotes and axenic amastigotes) activity through membranolytic mechanism. Also induces apoptosis in leishmania promastigotes at high peptide concentrations. Shows moderate hemolytic activity (LC(50)=25 uM). In contrast to many antibiotics, this peptide does not induce bacterial resistance. The polypeptide is Temporin-SHa (Pelophylax saharicus (Sahara frog)).